Consider the following 417-residue polypeptide: Sulfate adenylyltransferase (417 aa).

This sequence belongs to the sulfate adenylyltransferase family.

It catalyses the reaction sulfate + ATP + H(+) = adenosine 5'-phosphosulfate + diphosphate. Its pathway is sulfur metabolism; hydrogen sulfide biosynthesis; sulfite from sulfate: step 1/3. This Psychrobacter cryohalolentis (strain ATCC BAA-1226 / DSM 17306 / VKM B-2378 / K5) protein is Sulfate adenylyltransferase.